A 411-amino-acid polypeptide reads, in one-letter code: LL-diaminopimelate aminotransferase 1 (411 aa).

Substrate-binding residues include Tyr-15 and Gly-42. Pyridoxal 5'-phosphate-binding positions include Tyr-72, 108–109 (SK), Tyr-132, Asn-187, Tyr-218, and 246–248 (SFS). Substrate contacts are provided by Lys-109, Tyr-132, and Asn-187. Lys-249 is subject to N6-(pyridoxal phosphate)lysine. Pyridoxal 5'-phosphate is bound by residues Arg-257 and Asn-292. The substrate site is built by Asn-292 and Arg-388.

It belongs to the class-I pyridoxal-phosphate-dependent aminotransferase family. LL-diaminopimelate aminotransferase subfamily. In terms of assembly, homodimer. Requires pyridoxal 5'-phosphate as cofactor.

The catalysed reaction is (2S,6S)-2,6-diaminopimelate + 2-oxoglutarate = (S)-2,3,4,5-tetrahydrodipicolinate + L-glutamate + H2O + H(+). It participates in amino-acid biosynthesis; L-lysine biosynthesis via DAP pathway; LL-2,6-diaminopimelate from (S)-tetrahydrodipicolinate (aminotransferase route): step 1/1. Functionally, involved in the synthesis of meso-diaminopimelate (m-DAP or DL-DAP), required for both lysine and peptidoglycan biosynthesis. Catalyzes the direct conversion of tetrahydrodipicolinate to LL-diaminopimelate. This chain is LL-diaminopimelate aminotransferase 1, found in Nostoc sp. (strain PCC 7120 / SAG 25.82 / UTEX 2576).